A 99-amino-acid polypeptide reads, in one-letter code: Large ribosomal subunit protein uL23 (99 aa).

It belongs to the universal ribosomal protein uL23 family. Part of the 50S ribosomal subunit. Contacts protein L29, and trigger factor when it is bound to the ribosome.

In terms of biological role, one of the early assembly proteins it binds 23S rRNA. One of the proteins that surrounds the polypeptide exit tunnel on the outside of the ribosome. Forms the main docking site for trigger factor binding to the ribosome. In Agathobacter rectalis (strain ATCC 33656 / DSM 3377 / JCM 17463 / KCTC 5835 / VPI 0990) (Eubacterium rectale), this protein is Large ribosomal subunit protein uL23.